A 300-amino-acid polypeptide reads, in one-letter code: Protein SPEAR4 (300 aa).

The span at 1–10 shows a compositional bias: polar residues; it reads MCSKTSSVSY. The tract at residues 1–45 is disordered; the sequence is MCSKTSSVSYGNREDDDNYSSLCPKKQKHNNGGKKRVPRRGPGVA. Residues 25 to 39 show a composition bias toward basic residues; the sequence is KKQKHNNGGKKRVPR. Positions 40–48 match the SPL motif; that stretch reads RGPGVAELE. The EAR motif lies at 294–300; it reads IDLRLKL.

In terms of assembly, interacts with SPL and SPEAR2. As to expression, expressed in leaves.

Adapter-like transcriptional repressor recruiting TPL/TPR coepressors to inhibit TCP transcription factors. May be involved in leaf development. The sequence is that of Protein SPEAR4 from Arabidopsis thaliana (Mouse-ear cress).